Consider the following 343-residue polypeptide: DNA-directed RNA polymerase subunit alpha (343 aa).

The segment at Met1–Glu239 is alpha N-terminal domain (alpha-NTD). Positions Phe255–Tyr343 are alpha C-terminal domain (alpha-CTD).

It belongs to the RNA polymerase alpha chain family. In terms of assembly, homodimer. The RNAP catalytic core consists of 2 alpha, 1 beta, 1 beta' and 1 omega subunit. When a sigma factor is associated with the core the holoenzyme is formed, which can initiate transcription.

The catalysed reaction is RNA(n) + a ribonucleoside 5'-triphosphate = RNA(n+1) + diphosphate. Its function is as follows. DNA-dependent RNA polymerase catalyzes the transcription of DNA into RNA using the four ribonucleoside triphosphates as substrates. The sequence is that of DNA-directed RNA polymerase subunit alpha from Bradyrhizobium sp. (strain BTAi1 / ATCC BAA-1182).